The sequence spans 309 residues: Olfactory receptor 7A17 (309 aa).

Residues 1–25 (MEPENDTGISEFVLLGLSEEPELQP) lie on the Extracellular side of the membrane. Asparagine 5 is a glycosylation site (N-linked (GlcNAc...) asparagine). The helical transmembrane segment at 26–46 (FLFGLFLSMYLVTVLGNLLII) threads the bilayer. At 47-54 (LATISDSH) the chain is on the cytoplasmic side. Residues 55–75 (LHTPMYFFLSNLSFADICFIS) form a helical membrane-spanning segment. Over 76-99 (TTIPKMLINIQTQSRVITYAGCIT) the chain is Extracellular. A disulfide bridge links cysteine 97 with cysteine 189. The chain crosses the membrane as a helical span at residues 100–120 (QMCFFVLFGGLDSLLLAVMAY). The Cytoplasmic segment spans residues 121 to 139 (DRFVAICHPLHYTVIMNPR). Residues 140-160 (LCGLLVLASWMIAALNSLSQS) traverse the membrane as a helical segment. The Extracellular segment spans residues 161 to 197 (LMVLWLSFCTDLEIPHFFCELNQVIHLACSDTFLNDM). Residues 198–217 (GMYFAAGLLAGGPLVGILCS) traverse the membrane as a helical segment. The Cytoplasmic segment spans residues 218 to 237 (YSKIVSSIRAISSAQGKYKA). The helical transmembrane segment at 238 to 258 (FSTCASHLSVVSLFCCTGLGV) threads the bilayer. The Extracellular segment spans residues 259-271 (YLTSAATHNSHTS). Residues 272 to 292 (ATASVMYTVATPMLNPFIYSL) form a helical membrane-spanning segment. At 293-309 (RNKDIKRALKMSFRGKQ) the chain is on the cytoplasmic side.

Belongs to the G-protein coupled receptor 1 family.

The protein resides in the cell membrane. Functionally, odorant receptor. This is Olfactory receptor 7A17 (OR7A17) from Homo sapiens (Human).